The primary structure comprises 556 residues: 2-succinyl-5-enolpyruvyl-6-hydroxy-3-cyclohexene-1-carboxylate synthase (556 aa).

It belongs to the TPP enzyme family. MenD subfamily. Homodimer. Requires Mg(2+) as cofactor. The cofactor is Mn(2+). It depends on thiamine diphosphate as a cofactor.

The catalysed reaction is isochorismate + 2-oxoglutarate + H(+) = 5-enolpyruvoyl-6-hydroxy-2-succinyl-cyclohex-3-ene-1-carboxylate + CO2. The protein operates within quinol/quinone metabolism; 1,4-dihydroxy-2-naphthoate biosynthesis; 1,4-dihydroxy-2-naphthoate from chorismate: step 2/7. It functions in the pathway quinol/quinone metabolism; menaquinone biosynthesis. In terms of biological role, catalyzes the thiamine diphosphate-dependent decarboxylation of 2-oxoglutarate and the subsequent addition of the resulting succinic semialdehyde-thiamine pyrophosphate anion to isochorismate to yield 2-succinyl-5-enolpyruvyl-6-hydroxy-3-cyclohexene-1-carboxylate (SEPHCHC). The sequence is that of 2-succinyl-5-enolpyruvyl-6-hydroxy-3-cyclohexene-1-carboxylate synthase from Escherichia coli (strain SMS-3-5 / SECEC).